Reading from the N-terminus, the 876-residue chain is Alanine--tRNA ligase (876 aa).

The Zn(2+) site is built by His565, His569, Cys667, and His671.

Belongs to the class-II aminoacyl-tRNA synthetase family. Requires Zn(2+) as cofactor.

It localises to the cytoplasm. It catalyses the reaction tRNA(Ala) + L-alanine + ATP = L-alanyl-tRNA(Ala) + AMP + diphosphate. Functionally, catalyzes the attachment of alanine to tRNA(Ala) in a two-step reaction: alanine is first activated by ATP to form Ala-AMP and then transferred to the acceptor end of tRNA(Ala). Also edits incorrectly charged Ser-tRNA(Ala) and Gly-tRNA(Ala) via its editing domain. This is Alanine--tRNA ligase from Desulfosudis oleivorans (strain DSM 6200 / JCM 39069 / Hxd3) (Desulfococcus oleovorans).